A 484-amino-acid polypeptide reads, in one-letter code: Protein nucleotidyltransferase YdiU (484 aa).

ATP contacts are provided by G81, G83, R84, K103, D115, G116, R166, and R173. D244 serves as the catalytic Proton acceptor. 2 residues coordinate Mg(2+): N245 and D254. D254 is a binding site for ATP.

It belongs to the SELO family. The cofactor is Mg(2+). Requires Mn(2+) as cofactor.

It carries out the reaction L-seryl-[protein] + ATP = 3-O-(5'-adenylyl)-L-seryl-[protein] + diphosphate. The enzyme catalyses L-threonyl-[protein] + ATP = 3-O-(5'-adenylyl)-L-threonyl-[protein] + diphosphate. It catalyses the reaction L-tyrosyl-[protein] + ATP = O-(5'-adenylyl)-L-tyrosyl-[protein] + diphosphate. The catalysed reaction is L-histidyl-[protein] + UTP = N(tele)-(5'-uridylyl)-L-histidyl-[protein] + diphosphate. It carries out the reaction L-seryl-[protein] + UTP = O-(5'-uridylyl)-L-seryl-[protein] + diphosphate. The enzyme catalyses L-tyrosyl-[protein] + UTP = O-(5'-uridylyl)-L-tyrosyl-[protein] + diphosphate. Nucleotidyltransferase involved in the post-translational modification of proteins. It can catalyze the addition of adenosine monophosphate (AMP) or uridine monophosphate (UMP) to a protein, resulting in modifications known as AMPylation and UMPylation. This chain is Protein nucleotidyltransferase YdiU, found in Shewanella oneidensis (strain ATCC 700550 / JCM 31522 / CIP 106686 / LMG 19005 / NCIMB 14063 / MR-1).